The primary structure comprises 150 residues: Dual specificity protein phosphatase 23 (150 aa).

Positions 7–150 (NFSWVLPGRL…AVFQFYQRTK (144 aa)) constitute a Tyrosine-protein phosphatase domain. Cysteine 95 acts as the Phosphocysteine intermediate in catalysis.

Belongs to the protein-tyrosine phosphatase family. Non-receptor class dual specificity subfamily. As to expression, widely expressed. Highly expressed in spleen, prostate, colon, adrenal gland, mammary gland, thyroid and trachea. Expressed at lower level in uterus, small intestine, bladder, bone marrow, brain, spinal cord and stomach.

It localises to the cytoplasm. Its subcellular location is the cytosol. The protein localises to the nucleus. It catalyses the reaction O-phospho-L-tyrosyl-[protein] + H2O = L-tyrosyl-[protein] + phosphate. The enzyme catalyses O-phospho-L-seryl-[protein] + H2O = L-seryl-[protein] + phosphate. It carries out the reaction O-phospho-L-threonyl-[protein] + H2O = L-threonyl-[protein] + phosphate. Its function is as follows. Protein phosphatase that mediates dephosphorylation of proteins phosphorylated on Tyr and Ser/Thr residues. In vitro, it can dephosphorylate p44-ERK1 (MAPK3) but not p54 SAPK-beta (MAPK10) in vitro. Able to enhance activation of JNK and p38 (MAPK14). This Homo sapiens (Human) protein is Dual specificity protein phosphatase 23 (DUSP23).